The primary structure comprises 292 residues: Intermediate transcription factor 3 small subunit (292 aa).

The protein belongs to the orthopoxvirus OPG134 family. In terms of assembly, heterodimer of a 45 kDa (A23R) and a 32 kDa (A8R) subunit to form the virus intermediate transcription factor (VITF)-3.

Acts with RNA polymerase to initiate transcription from intermediate gene promoters. The chain is Intermediate transcription factor 3 small subunit (OPG134) from Monkeypox virus.